The chain runs to 354 residues: DNA integrity scanning protein DisA (354 aa).

Residues 6–144 enclose the DAC domain; sequence GIGIKNVLKI…GDIKYVLRES (139 aa). Residues G73, L91, and 104 to 108 contribute to the ATP site; that span reads TRHRT.

This sequence belongs to the DisA family. Homooctamer. Mg(2+) is required as a cofactor.

The catalysed reaction is 2 ATP = 3',3'-c-di-AMP + 2 diphosphate. Participates in a DNA-damage check-point that is active prior to asymmetric division when DNA is damaged. DisA forms globular foci that rapidly scan along the chromosomes during sporulation, searching for lesions. When a lesion is present, DisA pauses at the lesion site. This triggers a cellular response that culminates in a temporary block in sporulation initiation. Functionally, also has diadenylate cyclase activity, catalyzing the condensation of 2 ATP molecules into cyclic di-AMP (c-di-AMP). c-di-AMP acts as a signaling molecule that couples DNA integrity with progression of sporulation. The rise in c-di-AMP level generated by DisA while scanning the chromosome, operates as a positive signal that advances sporulation; upon encountering a lesion, the DisA focus arrests at the damaged site and halts c-di-AMP synthesis. The polypeptide is DNA integrity scanning protein DisA (Clostridium beijerinckii (strain ATCC 51743 / NCIMB 8052) (Clostridium acetobutylicum)).